Here is a 450-residue protein sequence, read N- to C-terminus: tRNA modification GTPase MnmE (450 aa).

The (6S)-5-formyl-5,6,7,8-tetrahydrofolate site is built by R20, E78, and K117. The 162-residue stretch at 211–372 (GLRMVIVGKP…LEESIYRETQ (162 aa)) folds into the TrmE-type G domain. N221 contributes to the K(+) binding site. GTP-binding positions include 221 to 226 (NVGKST), 240 to 246 (TDIPGTT), and 265 to 268 (DTAG). A Mg(2+)-binding site is contributed by S225. K(+)-binding residues include T240, I242, and T245. Mg(2+) is bound at residue T246. K450 contributes to the (6S)-5-formyl-5,6,7,8-tetrahydrofolate binding site.

The protein belongs to the TRAFAC class TrmE-Era-EngA-EngB-Septin-like GTPase superfamily. TrmE GTPase family. In terms of assembly, homodimer. Heterotetramer of two MnmE and two MnmG subunits. Requires K(+) as cofactor.

The protein localises to the cytoplasm. In terms of biological role, exhibits a very high intrinsic GTPase hydrolysis rate. Involved in the addition of a carboxymethylaminomethyl (cmnm) group at the wobble position (U34) of certain tRNAs, forming tRNA-cmnm(5)s(2)U34. The polypeptide is tRNA modification GTPase MnmE (Thermotoga sp. (strain RQ2)).